The primary structure comprises 166 residues: 16S rRNA aminocarboxypropyltransferase (166 aa).

The S-adenosyl-L-methionine site is built by Thr-17, Ile-62, Leu-84, Tyr-99, and Ser-103.

This sequence belongs to the TDD superfamily. TSR3 family.

Its subcellular location is the cytoplasm. The enzyme catalyses an N(1)-methylpseudouridine in rRNA + S-adenosyl-L-methionine = N(1)-methyl-N(3)-[(3S)-3-amino-3-carboxypropyl]pseudouridine in rRNA + S-methyl-5'-thioadenosine + H(+). Aminocarboxypropyltransferase that catalyzes the aminocarboxypropyl transfer on pseudouridine corresponding to position 914 in M.jannaschii 16S rRNA. It constitutes the last step in biosynthesis of the hypermodified N1-methyl-N3-(3-amino-3-carboxypropyl) pseudouridine (m1acp3-Psi). The chain is 16S rRNA aminocarboxypropyltransferase from Saccharolobus islandicus (strain Y.N.15.51 / Yellowstone #2) (Sulfolobus islandicus).